We begin with the raw amino-acid sequence, 642 residues long: Palmitoyltransferase akr1 (642 aa).

6 ANK repeats span residues 1–29 (MGSL…DVNA), 33–62 (GGAT…DVNA), 67–96 (LQAA…DPLL), 100–129 (QGFN…SVDL), 133–162 (QQHT…DVLA), and 166–196 (DKMT…PCTA). Residues 1–256 (MGSLFLAASQ…SKFQFSQKTF (256 aa)) are Cytoplasmic-facing. The next 2 membrane-spanning stretches (helical) occupy residues 257 to 277 (IIFC…IMSI) and 278 to 298 (CPMV…FKYI). Residues 299–316 (TTCIHANIDIVHFYLETP) lie on the Cytoplasmic side of the membrane. A helical transmembrane segment spans residues 317 to 337 (FLAGIFSSIFFWVWCHSLLYI). Topologically, residues 338 to 343 (VPKTLP) are lumenal. Residues 344 to 364 (IKPLSSLLFVLISFTCIGLYV) traverse the membrane as a helical segment. Residues 365 to 444 (RTAFQNPGYV…NCVGARNHRT (80 aa)) are Cytoplasmic-facing. The DHHC domain occupies 400–450 (HYCLKCFQVKPPRSYHCGACKRCINRYDHHCPWTGNCVGARNHRTFLLFVF). Catalysis depends on C430, which acts as the S-palmitoyl cysteine intermediate. The helical transmembrane segment at 445 to 465 (FLLFVFTLSTLIPIYFYVAFY) threads the bilayer. The Lumenal portion of the chain corresponds to 466 to 496 (YLQNIPIQKKYESYRCLFISGTICQWSLKDM). The helical transmembrane segment at 497 to 517 (FVLVASLTLFVNWCWVVVLAF) threads the bilayer. At 518 to 642 (TQICQVAHNV…GRQDEATRHV (125 aa)) the chain is on the cytoplasmic side.

Belongs to the DHHC palmitoyltransferase family. AKR/ZDHHC17 subfamily.

It localises to the early endosome membrane. It is found in the golgi apparatus membrane. The enzyme catalyses L-cysteinyl-[protein] + hexadecanoyl-CoA = S-hexadecanoyl-L-cysteinyl-[protein] + CoA. In terms of biological role, palmitoyltransferase specific for casein kinase 1. This is Palmitoyltransferase akr1 (akr1) from Schizosaccharomyces pombe (strain 972 / ATCC 24843) (Fission yeast).